The sequence spans 882 residues: Valine--tRNA ligase (882 aa).

The 'HIGH' region signature appears at 45 to 55; the sequence is PNVTGSLHIGH. The 'KMSKS' region motif lies at 525–529; that stretch reads KFSKS. Position 528 (Lys-528) interacts with ATP. Residues 812 to 881 adopt a coiled-coil conformation; sequence EGLIDVAKEK…VLKKGIQNLA (70 aa).

It belongs to the class-I aminoacyl-tRNA synthetase family. ValS type 1 subfamily. As to quaternary structure, monomer.

Its subcellular location is the cytoplasm. The catalysed reaction is tRNA(Val) + L-valine + ATP = L-valyl-tRNA(Val) + AMP + diphosphate. In terms of biological role, catalyzes the attachment of valine to tRNA(Val). As ValRS can inadvertently accommodate and process structurally similar amino acids such as threonine, to avoid such errors, it has a 'posttransfer' editing activity that hydrolyzes mischarged Thr-tRNA(Val) in a tRNA-dependent manner. The sequence is that of Valine--tRNA ligase from Leptospira interrogans serogroup Icterohaemorrhagiae serovar copenhageni (strain Fiocruz L1-130).